Consider the following 84-residue polypeptide: Beta-mammal Tt1g (84 aa).

A signal peptide spans 1–20; that stretch reads MKGMILFISCILLIGIVVEC. Positions 21 to 82 constitute an LCN-type CS-alpha/beta domain; the sequence is KEGYLMDHEG…VWERATNRCG (62 aa). 4 cysteine pairs are disulfide-bonded: Cys-31–Cys-81, Cys-35–Cys-57, Cys-43–Cys-62, and Cys-47–Cys-64. At Cys-81 the chain carries Cysteine amide.

It belongs to the long (4 C-C) scorpion toxin superfamily. Sodium channel inhibitor family. Beta subfamily. As to expression, expressed by the venom gland.

Its subcellular location is the secreted. Functionally, beta toxins modify sodium channel function in two ways: an excitatory effect (shifting the activation process to more negative potential) and/or a depressant effect (reducing the peak current). At concentration of 500 nM this toxin produces channel opening at more negative potentials in hNav1.2/SCN2A and hNav1.3/SCN3A, which shows the biggest effect. On the other hand the peak current is decreased in hNav1.4/SCN4A and hNav1.5/SCN5A channels, without apparent modification of the activation gate. This toxin is active against mammals. The sequence is that of Beta-mammal Tt1g from Tityus trivittatus (Argentinean scorpion).